We begin with the raw amino-acid sequence, 832 residues long: SID1 transmembrane family member 2 (832 aa).

The signal sequence occupies residues 1–18; it reads MIAWRLPLCVLLVASVES. Residues 19 to 293 are Extracellular-facing; that stretch reads HLGALGPKNV…VSQAVTSEAY (275 aa). Asn-27, Asn-54, Asn-60, Asn-123, Asn-141, and Asn-165 each carry an N-linked (GlcNAc...) asparagine glycan. A helical transmembrane segment spans residues 294–314; the sequence is VGGMLFCLGIFLSFYLLTVLL. Residues 315-447 lie on the Cytoplasmic side of the membrane; the sequence is ACWENWRQRK…DKRVLRKKYQ (133 aa). Phosphoserine occurs at positions 401, 403, and 404. A helical transmembrane segment spans residues 448-468; it reads IYFWNIATIAVFYALPVVQLV. At 469–499 the chain is on the extracellular side; sequence ITYQTVVNVTGNQDICYYNFLCAHPLGNLSA. N-linked (GlcNAc...) asparagine glycans are attached at residues Asn-476 and Asn-496. The helical transmembrane segment at 500–520 threads the bilayer; the sequence is FNNILSNLGYILLGLLFLLII. Topologically, residues 521–546 are cytoplasmic; sequence LQREINHNRALLRNDLYALECGIPKH. The helical transmembrane segment at 547-567 threads the bilayer; that stretch reads FGLFYAMGTALMMEGLLSACY. The Extracellular portion of the chain corresponds to 568–605; it reads HVCPNYTNFQFDTSFMYMIAGLCMLKLYQKRHPDINAS. N-linked (GlcNAc...) asparagine glycans are attached at residues Asn-572 and Asn-603. A helical membrane pass occupies residues 606–626; it reads AYSAYACLAIVIFFSVLGVVF. The Cytoplasmic portion of the chain corresponds to 627–631; the sequence is GKGNT. Residues 632-652 traverse the membrane as a helical segment; that stretch reads AFWIVFSVIHIISTLLLSTQL. The Extracellular segment spans residues 653-688; it reads YYMGRWKLDSGIFRRILHVLYTDCIRQCSGPLYTDR. Residues 689–709 form a helical membrane-spanning segment; the sequence is MVLLVMGNIINWSLAAYGLIM. At 710–715 the chain is on the cytoplasmic side; it reads RPNDFA. The helical transmembrane segment at 716–736 threads the bilayer; it reads SYLLAIGICNLLLYFAFYIIM. Residues 737-746 lie on the Extracellular side of the membrane; that stretch reads KLRSGERIKL. A helical transmembrane segment spans residues 747–767; the sequence is IPLLCIVCTSVVWGFALFFFF. Residues 768–796 lie on the Cytoplasmic side of the membrane; sequence QGLSTWQKTPAESREHNRDCILLDFFDDH. Residues 797–817 traverse the membrane as a helical segment; sequence DIWHFLSSIAMFGSFLVLLTL. The Extracellular portion of the chain corresponds to 818 to 832; that stretch reads DDDLDTVQRDKIYVF.

This sequence belongs to the SID1 family. As to quaternary structure, interacts with adapter protein complex 1 (AP-1) and AP-2, but not AP-3 and AP-4. Interacts with LAMP2. In terms of processing, glycosylated. In terms of tissue distribution, widely expressed, including in the liver, brain and kidney (at protein level).

Its subcellular location is the lysosome membrane. The protein localises to the cell membrane. Mediates the translocation of RNA and DNA across the lysosomal membrane during RNA and DNA autophagy (RDA), a process in which RNA and DNA is directly imported into lysosomes in an ATP-dependent manner, and degraded. Involved in the uptake of single-stranded oligonucleotides by living cells, a process called gymnosis. In vitro, mediates the uptake of linear DNA more efficiently than that of circular DNA, but exhibits similar uptake efficacy toward RNA and DNA. Binds long double-stranded RNA (dsRNA) (500 - 700 base pairs), but not dsRNA shorter than 100 bp. In Mus musculus (Mouse), this protein is SID1 transmembrane family member 2 (Sidt2).